A 196-amino-acid polypeptide reads, in one-letter code: Phosphoheptose isomerase (196 aa).

The region spanning 33 to 192 (LIQSLKNGGK…ESECGENGNT (160 aa)) is the SIS domain. Residue 48 to 50 (NGG) participates in substrate binding. H57 and E61 together coordinate Zn(2+). Substrate-binding positions include E61, 90-91 (ND), 116-118 (STS), S121, and Q168. Zn(2+) is bound by residues Q168 and H176.

It belongs to the SIS family. GmhA subfamily. As to quaternary structure, homotetramer. Zn(2+) is required as a cofactor.

It is found in the cytoplasm. It catalyses the reaction 2 D-sedoheptulose 7-phosphate = D-glycero-alpha-D-manno-heptose 7-phosphate + D-glycero-beta-D-manno-heptose 7-phosphate. Its pathway is carbohydrate biosynthesis; D-glycero-D-manno-heptose 7-phosphate biosynthesis; D-glycero-alpha-D-manno-heptose 7-phosphate and D-glycero-beta-D-manno-heptose 7-phosphate from sedoheptulose 7-phosphate: step 1/1. In terms of biological role, catalyzes the isomerization of sedoheptulose 7-phosphate in D-glycero-D-manno-heptose 7-phosphate. The protein is Phosphoheptose isomerase of Helicobacter hepaticus (strain ATCC 51449 / 3B1).